The chain runs to 465 residues: tRNA-2-methylthio-N(6)-dimethylallyladenosine synthase (465 aa).

The 116-residue stretch at methionine 26 to arginine 141 folds into the MTTase N-terminal domain. Positions 35, 71, 104, 173, 177, and 180 each coordinate [4Fe-4S] cluster. The Radical SAM core domain maps to proline 159 to arginine 388. A TRAM domain is found at leucine 391–glycine 453.

This sequence belongs to the methylthiotransferase family. MiaB subfamily. As to quaternary structure, monomer. [4Fe-4S] cluster is required as a cofactor.

The protein resides in the cytoplasm. The enzyme catalyses N(6)-dimethylallyladenosine(37) in tRNA + (sulfur carrier)-SH + AH2 + 2 S-adenosyl-L-methionine = 2-methylsulfanyl-N(6)-dimethylallyladenosine(37) in tRNA + (sulfur carrier)-H + 5'-deoxyadenosine + L-methionine + A + S-adenosyl-L-homocysteine + 2 H(+). Catalyzes the methylthiolation of N6-(dimethylallyl)adenosine (i(6)A), leading to the formation of 2-methylthio-N6-(dimethylallyl)adenosine (ms(2)i(6)A) at position 37 in tRNAs that read codons beginning with uridine. The sequence is that of tRNA-2-methylthio-N(6)-dimethylallyladenosine synthase from Thermus thermophilus (strain ATCC 27634 / DSM 579 / HB8).